Here is a 764-residue protein sequence, read N- to C-terminus: DNA polymerase 3 (764 aa).

Belongs to the DNA polymerase type-B family.

The enzyme catalyses DNA(n) + a 2'-deoxyribonucleoside 5'-triphosphate = DNA(n+1) + diphosphate. This Saccharolobus solfataricus (strain ATCC 35092 / DSM 1617 / JCM 11322 / P2) (Sulfolobus solfataricus) protein is DNA polymerase 3 (dpo3).